The chain runs to 301 residues: Small ribosomal subunit biogenesis GTPase RsgA (301 aa).

The 160-residue stretch at 65 to 224 (YNQLIRPKVA…LVDTPGFGNL (160 aa)) folds into the CP-type G domain. GTP-binding positions include 115–118 (SKYD) and 167–175 (GNSGVGKST). Zn(2+)-binding residues include C247, C252, H254, and C260.

The protein belongs to the TRAFAC class YlqF/YawG GTPase family. RsgA subfamily. Monomer. Associates with 30S ribosomal subunit, binds 16S rRNA. Requires Zn(2+) as cofactor.

Its subcellular location is the cytoplasm. Its function is as follows. One of several proteins that assist in the late maturation steps of the functional core of the 30S ribosomal subunit. Helps release RbfA from mature subunits. May play a role in the assembly of ribosomal proteins into the subunit. Circularly permuted GTPase that catalyzes slow GTP hydrolysis, GTPase activity is stimulated by the 30S ribosomal subunit. In Ureaplasma urealyticum serovar 10 (strain ATCC 33699 / Western), this protein is Small ribosomal subunit biogenesis GTPase RsgA.